A 358-amino-acid polypeptide reads, in one-letter code: UDP-N-acetylglucosamine--N-acetylmuramyl-(pentapeptide) pyrophosphoryl-undecaprenol N-acetylglucosamine transferase (358 aa).

UDP-N-acetyl-alpha-D-glucosamine contacts are provided by residues Thr11–Gly13, Asn122, Arg161, Ser189, Ile243, Ala262–Glu267, and Gln288.

This sequence belongs to the glycosyltransferase 28 family. MurG subfamily.

Its subcellular location is the cell inner membrane. It catalyses the reaction di-trans,octa-cis-undecaprenyl diphospho-N-acetyl-alpha-D-muramoyl-L-alanyl-D-glutamyl-meso-2,6-diaminopimeloyl-D-alanyl-D-alanine + UDP-N-acetyl-alpha-D-glucosamine = di-trans,octa-cis-undecaprenyl diphospho-[N-acetyl-alpha-D-glucosaminyl-(1-&gt;4)]-N-acetyl-alpha-D-muramoyl-L-alanyl-D-glutamyl-meso-2,6-diaminopimeloyl-D-alanyl-D-alanine + UDP + H(+). It functions in the pathway cell wall biogenesis; peptidoglycan biosynthesis. In terms of biological role, cell wall formation. Catalyzes the transfer of a GlcNAc subunit on undecaprenyl-pyrophosphoryl-MurNAc-pentapeptide (lipid intermediate I) to form undecaprenyl-pyrophosphoryl-MurNAc-(pentapeptide)GlcNAc (lipid intermediate II). The polypeptide is UDP-N-acetylglucosamine--N-acetylmuramyl-(pentapeptide) pyrophosphoryl-undecaprenol N-acetylglucosamine transferase (Coxiella burnetii (strain CbuK_Q154) (Coxiella burnetii (strain Q154))).